The chain runs to 458 residues: Argininosuccinate lyase (458 aa).

Belongs to the lyase 1 family. Argininosuccinate lyase subfamily.

Its subcellular location is the cytoplasm. It catalyses the reaction 2-(N(omega)-L-arginino)succinate = fumarate + L-arginine. It functions in the pathway amino-acid biosynthesis; L-arginine biosynthesis; L-arginine from L-ornithine and carbamoyl phosphate: step 3/3. The sequence is that of Argininosuccinate lyase from Acetivibrio thermocellus (strain ATCC 27405 / DSM 1237 / JCM 9322 / NBRC 103400 / NCIMB 10682 / NRRL B-4536 / VPI 7372) (Clostridium thermocellum).